The chain runs to 337 residues: Ferrochelatase (337 aa).

2 residues coordinate Fe cation: His-189 and Glu-293.

It belongs to the ferrochelatase family.

The protein localises to the cytoplasm. It catalyses the reaction heme b + 2 H(+) = protoporphyrin IX + Fe(2+). The protein operates within porphyrin-containing compound metabolism; protoheme biosynthesis; protoheme from protoporphyrin-IX: step 1/1. Its function is as follows. Catalyzes the ferrous insertion into protoporphyrin IX. The chain is Ferrochelatase from Pseudomonas entomophila (strain L48).